Here is a 238-residue protein sequence, read N- to C-terminus: Ribonuclease PH (238 aa).

Phosphate-binding positions include R86 and G124 to R126.

Belongs to the RNase PH family. Homohexameric ring arranged as a trimer of dimers.

The catalysed reaction is tRNA(n+1) + phosphate = tRNA(n) + a ribonucleoside 5'-diphosphate. In terms of biological role, phosphorolytic 3'-5' exoribonuclease that plays an important role in tRNA 3'-end maturation. Removes nucleotide residues following the 3'-CCA terminus of tRNAs; can also add nucleotides to the ends of RNA molecules by using nucleoside diphosphates as substrates, but this may not be physiologically important. Probably plays a role in initiation of 16S rRNA degradation (leading to ribosome degradation) during starvation. The polypeptide is Ribonuclease PH (Agrobacterium fabrum (strain C58 / ATCC 33970) (Agrobacterium tumefaciens (strain C58))).